The chain runs to 161 residues: Cyclic pyranopterin monophosphate synthase (161 aa).

Substrate is bound by residues 75–77 (LCH) and 113–114 (ME). The active site involves aspartate 128.

It belongs to the MoaC family. As to quaternary structure, homohexamer; trimer of dimers.

It carries out the reaction (8S)-3',8-cyclo-7,8-dihydroguanosine 5'-triphosphate = cyclic pyranopterin phosphate + diphosphate. The protein operates within cofactor biosynthesis; molybdopterin biosynthesis. Functionally, catalyzes the conversion of (8S)-3',8-cyclo-7,8-dihydroguanosine 5'-triphosphate to cyclic pyranopterin monophosphate (cPMP). This chain is Cyclic pyranopterin monophosphate synthase, found in Cupriavidus pinatubonensis (strain JMP 134 / LMG 1197) (Cupriavidus necator (strain JMP 134)).